Here is a 286-residue protein sequence, read N- to C-terminus: MATATLPATVGVIGLWDGTTDGKEGFMDYATGDTNVKQPKEYEIEVHDIRKLDPQPTLLNNGYELVDIPTVVTEEQFSESGKSEKGKAYIKDVYFAECKRIIQEVAGGVDTIIPVSFRMREQKGEKESTTKKLGNIESRYAPRPVAHLDRDTPTAITVLEETVGKEKAQELLSKHKRNPATMWPLCFLNHDRIPTWNYDTHVGHVWSLNDPRVSDRGEKTYDCVVKYDERYDYHYVSDLKPEECLVFCSFDSIPKYAMPHSAFWDNNVPADAPNRRSIEVRSLVFF.

It belongs to the asaB hydroxylase/desaturase family.

It functions in the pathway secondary metabolite biosynthesis. Its function is as follows. Oxidoreductase; part of the gene cluster that mediates the biosynthesis of squalestatin S1 (SQS1, also known as zaragozic acid A), a heavily oxidized fungal polyketide that offers potent cholesterol lowering activity by targeting squalene synthase (SS). SQS1 is composed of a 2,8-dioxobicyclic[3.2.1]octane-3,4,5-tricarboxyclic acid core that is connected to two lipophilic polyketide arms. These initial steps feature the priming of an unusual benzoic acid starter unit onto the highly reducing polyketide synthase clz14, followed by oxaloacetate extension and product release to generate a tricarboxylic acid containing product. The phenylalanine ammonia lyase (PAL) clz10 and the acyl-CoA ligase clz12 are involved in transforming phenylalanine into benzoyl-CoA. The citrate synthase-like protein clz17 is involved in connecting the C-alpha-carbons of the hexaketide chain and oxaloacetate to afford the tricarboxylic acid unit. The potential hydrolytic enzymes, clz11 and clz13, are in close proximity to pks2 and may participate in product release. On the other side, the tetraketide arm is synthesized by a the squalestatin tetraketide synthase clz2 and enzymatically esterified to the core in the last biosynthetic step, by the acetyltransferase clz6. The biosynthesis of the tetraketide must involve 3 rounds of chain extension. After the first and second rounds methyl-transfer occurs, and in all rounds of extension the ketoreductase and dehydratase are active. The enoyl reductase and C-MeT of clz2 are not active in the final round of extension. The acetyltransferase clz6 appears to have a broad substrate selectivity for its acyl CoA substrate, allowing the in vitro synthesis of novel squalestatins. The biosynthesis of SQS1 requires several oxidative steps likely performed by oxidoreductases clz3, clz15 and clz16. Finally, in support of the identification of the cluster as being responsible for SQS1 production, the cluster contains a gene encoding a putative squalene synthase (SS) clz20, suggesting a likely mechanism for self-resistance. This chain is Oxidoreductase clz15, found in Cochliobolus lunatus (Filamentous fungus).